The following is a 376-amino-acid chain: Carbamoyl phosphate synthase small chain (376 aa).

Positions 1 to 183 are CPSase; sequence MENILLNKAL…IYKKKYIEKN (183 aa). Residues serine 51, glycine 235, and glycine 237 each coordinate L-glutamine. The region spanning 187–374 is the Glutamine amidotransferase type-1 domain; the sequence is NIVAYDFGIK…INLVKDYRLN (188 aa). The Nucleophile role is filled by cysteine 263. 4 residues coordinate L-glutamine: leucine 264, glutamine 267, asparagine 305, and phenylalanine 308. Active-site residues include histidine 347 and glutamate 349.

This sequence belongs to the CarA family. In terms of assembly, composed of two chains; the small (or glutamine) chain promotes the hydrolysis of glutamine to ammonia, which is used by the large (or ammonia) chain to synthesize carbamoyl phosphate. Tetramer of heterodimers (alpha,beta)4.

It carries out the reaction hydrogencarbonate + L-glutamine + 2 ATP + H2O = carbamoyl phosphate + L-glutamate + 2 ADP + phosphate + 2 H(+). The catalysed reaction is L-glutamine + H2O = L-glutamate + NH4(+). It functions in the pathway amino-acid biosynthesis; L-arginine biosynthesis; carbamoyl phosphate from bicarbonate: step 1/1. The protein operates within pyrimidine metabolism; UMP biosynthesis via de novo pathway; (S)-dihydroorotate from bicarbonate: step 1/3. Its function is as follows. Small subunit of the glutamine-dependent carbamoyl phosphate synthetase (CPSase). CPSase catalyzes the formation of carbamoyl phosphate from the ammonia moiety of glutamine, carbonate, and phosphate donated by ATP, constituting the first step of 2 biosynthetic pathways, one leading to arginine and/or urea and the other to pyrimidine nucleotides. The small subunit (glutamine amidotransferase) binds and cleaves glutamine to supply the large subunit with the substrate ammonia. The polypeptide is Carbamoyl phosphate synthase small chain (Wigglesworthia glossinidia brevipalpis).